The following is a 522-amino-acid chain: Probable poly(ADP-ribose) glycohydrolase 2 (522 aa).

This sequence belongs to the poly(ADP-ribose) glycohydrolase family.

It carries out the reaction [(1''-&gt;2')-ADP-alpha-D-ribose](n) + H2O = [(1''-&gt;2')-ADP-alpha-D-ribose](n-1) + ADP-D-ribose. Its function is as follows. Poly(ADP-ribose) synthesized after DNA damage is only present transiently and is rapidly degraded by poly(ADP-ribose) glycohydrolase. The chain is Probable poly(ADP-ribose) glycohydrolase 2 (PARG2) from Arabidopsis thaliana (Mouse-ear cress).